A 339-amino-acid polypeptide reads, in one-letter code: Ketol-acid reductoisomerase (NADP(+)) (339 aa).

The 182-residue stretch at 1–182 (MRVYYDRDAD…GGGRAGIIET (182 aa)) folds into the KARI N-terminal Rossmann domain. NADP(+) is bound by residues 24–27 (YGSQ), Arg-48, Ser-51, Ser-53, and 83–86 (DELQ). His-108 is an active-site residue. Gly-134 is an NADP(+) binding site. The KARI C-terminal knotted domain occupies 183 to 328 (TFKEECETDL…ERLRAMMPWI (146 aa)). Asp-191, Glu-195, Glu-227, and Glu-231 together coordinate Mg(2+). Residue Ser-252 coordinates substrate.

Belongs to the ketol-acid reductoisomerase family. Requires Mg(2+) as cofactor.

The enzyme catalyses (2R)-2,3-dihydroxy-3-methylbutanoate + NADP(+) = (2S)-2-acetolactate + NADPH + H(+). It catalyses the reaction (2R,3R)-2,3-dihydroxy-3-methylpentanoate + NADP(+) = (S)-2-ethyl-2-hydroxy-3-oxobutanoate + NADPH + H(+). The protein operates within amino-acid biosynthesis; L-isoleucine biosynthesis; L-isoleucine from 2-oxobutanoate: step 2/4. It participates in amino-acid biosynthesis; L-valine biosynthesis; L-valine from pyruvate: step 2/4. Functionally, involved in the biosynthesis of branched-chain amino acids (BCAA). Catalyzes an alkyl-migration followed by a ketol-acid reduction of (S)-2-acetolactate (S2AL) to yield (R)-2,3-dihydroxy-isovalerate. In the isomerase reaction, S2AL is rearranged via a Mg-dependent methyl migration to produce 3-hydroxy-3-methyl-2-ketobutyrate (HMKB). In the reductase reaction, this 2-ketoacid undergoes a metal-dependent reduction by NADPH to yield (R)-2,3-dihydroxy-isovalerate. This is Ketol-acid reductoisomerase (NADP(+)) from Methylobacterium nodulans (strain LMG 21967 / CNCM I-2342 / ORS 2060).